The sequence spans 456 residues: Septin-10 (456 aa).

The Septin-type G domain maps to 40–306 (QGFCFNILCV…ELYRRCKLQE (267 aa)). Positions 50-57 (GETGIGKS) are G1 motif. Residues 50–57 (GETGIGKS), G105, 186–194 (KADTISKSE), G240, and R255 contribute to the GTP site. A G3 motif region spans residues 102-105 (NTVG). Residues 185 to 188 (AKAD) are G4 motif. Phosphoserine is present on S418.

The protein belongs to the TRAFAC class TrmE-Era-EngA-EngB-Septin-like GTPase superfamily. Septin GTPase family. As to quaternary structure, septins polymerize into heterooligomeric protein complexes that form filaments, and can associate with cellular membranes, actin filaments and microtubules. GTPase activity is required for filament formation. Interacts with ADGB. Proteolytically cleaved in vitro in a calmodulin-dependent manner.

It localises to the cytoplasm. It is found in the cytoskeleton. The protein resides in the cell projection. The protein localises to the cilium. Its subcellular location is the flagellum. Its function is as follows. Filament-forming cytoskeletal GTPase. May play a role in cytokinesis (Potential). This Rattus norvegicus (Rat) protein is Septin-10.